The chain runs to 141 residues: Hemoglobin subunit alpha (141 aa).

Residues 1-141 (VLSAADKSNV…VSTVLTSKYR (141 aa)) enclose the Globin domain. Position 3 is a phosphoserine (Ser-3). An N6-succinyllysine mark is found at Lys-7 and Lys-11. Lys-16 carries the post-translational modification N6-acetyllysine; alternate. The residue at position 16 (Lys-16) is an N6-succinyllysine; alternate. Tyr-24 carries the phosphotyrosine modification. Ser-35 is modified (phosphoserine). An N6-succinyllysine modification is found at Lys-40. Ser-49 is modified (phosphoserine). An O2-binding site is contributed by His-58. His-87 contributes to the heme b binding site. The residue at position 102 (Ser-102) is a Phosphoserine. Position 108 is a phosphothreonine (Thr-108). A Phosphoserine modification is found at Ser-124. Thr-134 and Thr-137 each carry phosphothreonine. Residue Ser-138 is modified to Phosphoserine.

This sequence belongs to the globin family. Heterotetramer of two alpha chains and two beta chains. Red blood cells.

Its function is as follows. Involved in oxygen transport from the lung to the various peripheral tissues. In terms of biological role, hemopressin acts as an antagonist peptide of the cannabinoid receptor CNR1. Hemopressin-binding efficiently blocks cannabinoid receptor CNR1 and subsequent signaling. This is Hemoglobin subunit alpha (HBA) from Rangifer tarandus (Reindeer).